Consider the following 400-residue polypeptide: Acetate kinase (400 aa).

Residue N10 coordinates Mg(2+). K17 lines the ATP pocket. R91 provides a ligand contact to substrate. D150 acts as the Proton donor/acceptor in catalysis. ATP contacts are provided by residues 210 to 214 (HLGNG), 285 to 287 (DCR), and 333 to 337 (GIGEN). E387 provides a ligand contact to Mg(2+).

It belongs to the acetokinase family. Homodimer. Mg(2+) serves as cofactor. It depends on Mn(2+) as a cofactor.

The protein localises to the cytoplasm. The enzyme catalyses acetate + ATP = acetyl phosphate + ADP. It participates in metabolic intermediate biosynthesis; acetyl-CoA biosynthesis; acetyl-CoA from acetate: step 1/2. Its function is as follows. Catalyzes the formation of acetyl phosphate from acetate and ATP. Can also catalyze the reverse reaction. In Pectobacterium carotovorum subsp. carotovorum (strain PC1), this protein is Acetate kinase.